The chain runs to 141 residues: Putative antiporter subunit mnhB2 (141 aa).

Transmembrane regions (helical) follow at residues 10 to 30 (TVTK…FFAG), 35 to 55 (GGGF…FLAF), 70 to 90 (ILMI…TFFG), and 114 to 134 (ITLF…TVML).

It belongs to the CPA3 antiporters (TC 2.A.63) subunit B family. As to quaternary structure, may form a heterooligomeric complex that consists of seven subunits: mnhA2, mnhB2, mnhC2, mnhD2, mnhE2, mnhF2 and mnhG2.

It localises to the cell membrane. This chain is Putative antiporter subunit mnhB2 (mnhB2), found in Staphylococcus aureus (strain MRSA252).